Here is a 576-residue protein sequence, read N- to C-terminus: Pentatricopeptide repeat-containing protein At1g79080, chloroplastic (576 aa).

Residues 1–37 constitute a chloroplast transit peptide; the sequence is MSTLLNSVLSMASPESSPRKAVGFVSHIPSGFLHFSS. PPR repeat units follow at residues 105 to 139, 140 to 174, 175 to 209, 210 to 244, 245 to 279, 280 to 314, 315 to 349, 352 to 386, 387 to 417, 422 to 456, 457 to 487, 493 to 527, and 528 to 562; these read NVAH…GIIP, DASA…GYPS, NTVT…GLAP, NAFT…GGEP, NLVS…GFKA, NVVS…DRAP, SVVT…NHQF, TATS…RCKP, NEGT…LSNK, THDF…GFDP, DAHT…MEES, TVDN…KRMP, and NETT…KVIG.

Belongs to the PPR family. P subfamily.

It is found in the plastid. The protein resides in the chloroplast. The polypeptide is Pentatricopeptide repeat-containing protein At1g79080, chloroplastic (Arabidopsis thaliana (Mouse-ear cress)).